We begin with the raw amino-acid sequence, 686 residues long: 3',5'-cyclic-AMP phosphodiesterase 4C (686 aa).

Residues serine 9, serine 28, serine 40, and serine 83 each carry the phosphoserine modification. Disordered regions lie at residues 88 to 116 and 124 to 143; these read NGLP…VHHV and YRSD…TSSA. Residues 124 to 133 show a composition bias toward basic and acidic residues; that stretch reads YRSDSDHEPS. A PDEase domain is found at 313–642; sequence VQTDQEEQLA…EWYQSRIPCS (330 aa). Residue histidine 389 is the Proton donor of the active site. Histidine 389 serves as a coordination point for 3',5'-cyclic AMP. The AMP site is built by histidine 389 and histidine 393. Residues histidine 393, histidine 429, aspartate 430, and aspartate 547 each coordinate Zn(2+). AMP contacts are provided by aspartate 430, aspartate 547, glutamine 598, and phenylalanine 601. Position 430 (aspartate 430) interacts with Mg(2+). Residue aspartate 430 coordinates Mn(2+). 2 residues coordinate 3',5'-cyclic AMP: glutamine 598 and phenylalanine 601. The residue at position 642 (serine 642) is a Phosphoserine. Acidic residues predominate over residues 660–671; that stretch reads EAEEEEEEEDEG. Positions 660 to 686 are disordered; the sequence is EAEEEEEEEDEGQCTALNRESSELPST. Positions 674-686 are enriched in polar residues; that stretch reads TALNRESSELPST.

The protein belongs to the cyclic nucleotide phosphodiesterase family. PDE4 subfamily. Part of a complex containing AKAP5, ADCY5, ADCY6 and PKD2. The cofactor is Zn(2+). Mg(2+) serves as cofactor. It depends on Mn(2+) as a cofactor.

It is found in the cell projection. Its subcellular location is the cilium. It carries out the reaction 3',5'-cyclic AMP + H2O = AMP + H(+). It participates in purine metabolism; 3',5'-cyclic AMP degradation; AMP from 3',5'-cyclic AMP: step 1/1. Hydrolyzes the second messenger cAMP, which is a key regulator of many important physiological processes. The chain is 3',5'-cyclic-AMP phosphodiesterase 4C from Mus musculus (Mouse).